The following is a 160-amino-acid chain: 2-C-methyl-D-erythritol 2,4-cyclodiphosphate synthase (160 aa).

2 residues coordinate a divalent metal cation: aspartate 11 and histidine 13. Residues 11 to 13 (DVH) and 37 to 38 (HS) contribute to the 4-CDP-2-C-methyl-D-erythritol 2-phosphate site. Histidine 45 contributes to the a divalent metal cation binding site. Residues 59-61 (DIG) and arginine 145 contribute to the 4-CDP-2-C-methyl-D-erythritol 2-phosphate site.

Belongs to the IspF family. Homotrimer. A divalent metal cation is required as a cofactor.

The catalysed reaction is 4-CDP-2-C-methyl-D-erythritol 2-phosphate = 2-C-methyl-D-erythritol 2,4-cyclic diphosphate + CMP. Its pathway is isoprenoid biosynthesis; isopentenyl diphosphate biosynthesis via DXP pathway; isopentenyl diphosphate from 1-deoxy-D-xylulose 5-phosphate: step 4/6. Involved in the biosynthesis of isopentenyl diphosphate (IPP) and dimethylallyl diphosphate (DMAPP), two major building blocks of isoprenoid compounds. Catalyzes the conversion of 4-diphosphocytidyl-2-C-methyl-D-erythritol 2-phosphate (CDP-ME2P) to 2-C-methyl-D-erythritol 2,4-cyclodiphosphate (ME-CPP) with a corresponding release of cytidine 5-monophosphate (CMP). This is 2-C-methyl-D-erythritol 2,4-cyclodiphosphate synthase from Neisseria meningitidis serogroup A / serotype 4A (strain DSM 15465 / Z2491).